A 982-amino-acid polypeptide reads, in one-letter code: MASSSSSSSSTNSSAVTGRLPGARSANPRKARILGLFDAIQDAVGPPKQAAADRRTVEKTWKLMDKVVRLCQNPKLQLKNSPPYILDILPDTYQHLRLILSKYDDNQKLAQLSENEYFKIYIDSLMKKSKRAIRLFKEGKERMYEEQSQERRNLTKLSLIFSHMLAEIKAIFPSGQFQGDNFRITKADAAEFWRKFFGERTIVPWKIFRQCLHEVHQISSGLEAMALKSTIDLTCNDYISVFEFDIFTRLFQPWTSILRNWNFLAVTHPGYMAFLTYDEVKARLQKYSTKPGSYIFRLSCTRLGQWAIGYVTADGNILQTIPHNKPLFQALIDGSREGFYLYPDGRSYNPDLTDLCEPTPHDHIKVTQEQYELYCEMGSTFQLCKICAENDKDVKIEPCGHLMCTSCLTSWQESDGQGCPFCRCEIKGTEPIVVDPFDPRDENRCCSFNDSLCTPMLDFDDDDLREECLIMNRLASLRKMNERQNSPVTSPGSSPLSQRRKTPPDPLQIPHLNLPPVPPRLDLIQKGLARSPCASPTGSPKSSPCMVRKQDKPLPAPPPPLREPPPPPERPPPIPPDSRTCRHLHHTENVPCRDQSTQHDAWCTRDISGASQPSICRVAHDGSPKLGVPSSSVLNGRHSRMSTEAGFIRHKHHKRRESPLETIRVYNGLSGNEEYDVPPRLSPPPPPPTITIHPAIKCPLLVNSVSDKVRNSAEEDDSEYKIPSSHPVSSRLPLHCHSIKHFPRLCENGQCLSNGTHNGISEIKKLKQPDQGDVIATSTVPVPLPSARTSARENHPHGSSLTRTPSDYDLLVPHPGEESFDSSPPSQPPPPPPARTCVPEHAMPTASGCRPNSDVDLFLPHSDPCPEAPLPPARRGPGEAKSNRLSQEYDQLPSCPDCPQAPARPPKPVPRRTAPEIHHRRHYNCDSLAENVDAKIAKLMGEGFPFEEVKRALEIAQNNVDVARSILREFAFPPPVCPRLHL.

The segment covering Met-1–Ser-14 has biased composition (low complexity). Residues Met-1 to Ser-25 form a disordered region. The 4H stretch occupies residues Pro-46–Gln-178. The Cbl-PTB domain occupies Pro-46 to Asp-354. An EF-hand-like region spans residues Gly-179–Phe-251. Ca(2+) contacts are provided by Asp-232, Thr-234, Asn-236, Tyr-238, and Glu-243. Positions Gln-252–Asp-354 are SH2-like. Arg-297 serves as a coordination point for 4-O-phospho-L-tyrosine. Positions Leu-355–Leu-383 are linker. The segment at Cys-384–Arg-423 adopts an RING-type zinc-finger fold. 3 disordered regions span residues Met-480 to Arg-582, Val-709 to Val-728, and Leu-766 to Arg-911. Residues Arg-483 to Ser-497 show a composition bias toward polar residues. The span at Leu-554–Pro-576 shows a compositional bias: pro residues. The span at Pro-825 to Ala-834 shows a compositional bias: pro residues. In terms of domain architecture, UBA spans Ser-927–Phe-970.

In terms of assembly, interacts with several SH3 domain-containing proteins and with poly-ubiquitinated proteins.

It localises to the cytoplasm. The catalysed reaction is S-ubiquitinyl-[E2 ubiquitin-conjugating enzyme]-L-cysteine + [acceptor protein]-L-lysine = [E2 ubiquitin-conjugating enzyme]-L-cysteine + N(6)-ubiquitinyl-[acceptor protein]-L-lysine.. It functions in the pathway protein modification; protein ubiquitination. Functionally, E3 ubiquitin-protein ligase which accepts ubiquitin from specific E2 ubiquitin-conjugating enzymes, and transfers it to substrates, generally promoting their degradation by the proteasome. The chain is E3 ubiquitin-protein ligase CBL-B (cblb) from Xenopus tropicalis (Western clawed frog).